A 419-amino-acid polypeptide reads, in one-letter code: Ribosomal RNA large subunit methyltransferase G (419 aa).

The segment covering 386 to 408 has biased composition (basic and acidic residues); sequence KAEPFETHPTEAEAKVEVTESKP. The disordered stretch occupies residues 386-419; that stretch reads KAEPFETHPTEAEAKVEVTESKPHPQSSLYGTKK. Over residues 409-419 the composition is skewed to polar residues; sequence HPQSSLYGTKK.

This sequence belongs to the methyltransferase superfamily. RlmG family.

It localises to the cytoplasm. It carries out the reaction guanosine(1835) in 23S rRNA + S-adenosyl-L-methionine = N(2)-methylguanosine(1835) in 23S rRNA + S-adenosyl-L-homocysteine + H(+). Specifically methylates the guanine in position 1835 (m2G1835) of 23S rRNA. The protein is Ribosomal RNA large subunit methyltransferase G of Shewanella woodyi (strain ATCC 51908 / MS32).